The sequence spans 491 residues: (R)-citramalate synthase CimA (491 aa).

The 252-residue stretch at 3 to 254 (VRIFDTTLRD…DTKIKMEKLY (252 aa)) folds into the Pyruvate carboxyltransferase domain.

The protein belongs to the alpha-IPM synthase/homocitrate synthase family. As to quaternary structure, homodimer.

The enzyme catalyses pyruvate + acetyl-CoA + H2O = (3R)-citramalate + CoA + H(+). The protein operates within amino-acid biosynthesis; L-isoleucine biosynthesis; 2-oxobutanoate from pyruvate: step 1/3. Its function is as follows. Catalyzes the condensation of pyruvate and acetyl-coenzyme A to form (R)-citramalate. The protein is (R)-citramalate synthase CimA (cimA) of Methanocaldococcus jannaschii (strain ATCC 43067 / DSM 2661 / JAL-1 / JCM 10045 / NBRC 100440) (Methanococcus jannaschii).